Reading from the N-terminus, the 80-residue chain is Consomatin Mrc1 (80 aa).

The signal sequence occupies residues Met1–Gly22. A propeptide spanning residues Gly23–Arg57 is cleaved from the precursor. The cysteines at positions 63 and 68 are disulfide-linked. Position 65 is a D-tryptophan (Trp65). A 4-hydroxyproline mark is found at Pro69, Pro70, Pro71, and Pro72. The propeptide occupies Arg74–Gly80.

This sequence belongs to the conotoxin C superfamily. Consomatin family. As to expression, expressed by the venom duct.

The protein localises to the secreted. Moderately activates human somatostatin receptors (SSTR) with a preferential activation of SSTR1 and SSTR4. In vivo, does not cause behavioral changes in mice within a few minutes of intracranial injection, but causes a progressive loss of movement thereafter. Four to five hours after injection, mice recover, even with the highest dose tested. Shows antinociception and antihyperalgesia activities in two mouse models of acute pain, most probably by acting outside the central nervous system. In Conus mercator (Trader cone), this protein is Consomatin Mrc1.